A 234-amino-acid chain; its full sequence is Small ribosomal subunit protein uS3 (234 aa).

Residues Val39 to Lys107 enclose the KH type-2 domain.

This sequence belongs to the universal ribosomal protein uS3 family. As to quaternary structure, part of the 30S ribosomal subunit. Forms a tight complex with proteins S10 and S14.

Functionally, binds the lower part of the 30S subunit head. Binds mRNA in the 70S ribosome, positioning it for translation. In Haemophilus ducreyi (strain 35000HP / ATCC 700724), this protein is Small ribosomal subunit protein uS3.